The primary structure comprises 492 residues: Catalase isozyme 2 (492 aa).

Active-site residues include His-65 and Asn-138. A heme-binding site is contributed by Tyr-348.

The protein belongs to the catalase family. In terms of assembly, homotetramer. The cofactor is heme.

The protein localises to the peroxisome. The enzyme catalyses 2 H2O2 = O2 + 2 H2O. Functionally, occurs in almost all aerobically respiring organisms and serves to protect cells from the toxic effects of hydrogen peroxide. The polypeptide is Catalase isozyme 2 (CAT2) (Gossypium hirsutum (Upland cotton)).